Consider the following 424-residue polypeptide: Omega-6 fatty acid desaturase, chloroplastic (424 aa).

The transit peptide at 1–63 directs the protein to the chloroplast; it reads MACTLADSLL…TRNKVTVIHA (63 aa). Val-64 is subject to N-acetylvaline. A Histidine box-1 motif is present at residues 165 to 169; it reads HDCAH. The Histidine box-2 motif lies at 201 to 205; that stretch reads HDRHH. Positions 361–365 match the Histidine box-3 motif; sequence HIPHH.

The protein belongs to the fatty acid desaturase type 1 family.

Its subcellular location is the plastid. The protein resides in the chloroplast membrane. The enzyme catalyses a (9Z)-octadecenoyl-containing glycerolipid + 2 reduced [2Fe-2S]-[ferredoxin] + O2 + 2 H(+) = a (9Z,12Z)-octadecadienoyl-containing glycerolipid + 2 oxidized [2Fe-2S]-[ferredoxin] + 2 H2O. It functions in the pathway lipid metabolism; polyunsaturated fatty acid biosynthesis. Chloroplast omega-6 fatty acid desaturase introduces the second double bond in the biosynthesis of 16:3 and 18:3 fatty acids, important constituents of plant membranes. It is thought to use ferredoxin as an electron donor and to act on fatty acids esterified to galactolipids, sulfolipids and phosphatidylglycerol. The chain is Omega-6 fatty acid desaturase, chloroplastic from Glycine max (Soybean).